Consider the following 489-residue polypeptide: Leukocyte immunoglobulin-like receptor subfamily A member 1 (489 aa).

Residues 1 to 16 (MTPIVTVLICLRLSLG) form the signal peptide. Residues 17–461 (PRTHVQAGTL…SHPQDYTVEN (445 aa)) are Extracellular-facing. 4 Ig-like C2-type domains span residues 27–116 (PKPT…PLEL), 119–224 (TGAY…GVSK), 226–315 (PSLS…DPLD), and 326–415 (PFIS…SDSL). C49 and C98 are joined by a disulfide. A glycan (N-linked (GlcNAc...) asparagine) is linked at N140. 3 disulfide bridges follow: C145–C197, C157–C167, and C246–C297. N-linked (GlcNAc...) asparagine glycosylation is found at N281, N302, and N341. A disulfide bond links C346 and C397. The segment at 425–453 (TLSPPQNKSDSKAGAANTLSPSQNKTASH) is disordered. Residues N431 and N448 are each glycosylated (N-linked (GlcNAc...) asparagine). A compositionally biased stretch (polar residues) spans 441–453 (NTLSPSQNKTASH). A helical membrane pass occupies residues 462 to 482 (LIRMGIAGLVLVVLGILLFEA). Residues 483–489 (QHSQRSL) are Cytoplasmic-facing.

In terms of tissue distribution, detected in monocytes and B-cells.

It localises to the membrane. May act as receptor for class I MHC antigens. The protein is Leukocyte immunoglobulin-like receptor subfamily A member 1 (LILRA1) of Homo sapiens (Human).